Consider the following 254-residue polypeptide: Aspartate/glutamate leucyltransferase (254 aa).

Belongs to the R-transferase family. Bpt subfamily.

The protein resides in the cytoplasm. It catalyses the reaction N-terminal L-glutamyl-[protein] + L-leucyl-tRNA(Leu) = N-terminal L-leucyl-L-glutamyl-[protein] + tRNA(Leu) + H(+). The catalysed reaction is N-terminal L-aspartyl-[protein] + L-leucyl-tRNA(Leu) = N-terminal L-leucyl-L-aspartyl-[protein] + tRNA(Leu) + H(+). Its function is as follows. Functions in the N-end rule pathway of protein degradation where it conjugates Leu from its aminoacyl-tRNA to the N-termini of proteins containing an N-terminal aspartate or glutamate. The polypeptide is Aspartate/glutamate leucyltransferase (Maricaulis maris (strain MCS10) (Caulobacter maris)).